Consider the following 217-residue polypeptide: Formate dehydrogenase, nitrate-inducible, cytochrome b556(Fdn) subunit (217 aa).

At 1-11 (MSKSKMIVRTK) the chain is on the cytoplasmic side. Residues 12 to 36 (FIDRACHWTVVICFFLVALSGISFF) form a helical membrane-spanning segment. Histidine 18 contacts heme b. Residues 37 to 52 (FPTLQWLTQTFGTPQM) lie on the Periplasmic side of the membrane. A helical transmembrane segment spans residues 53–74 (GRILHPFFGIAIFVALMFMFVR). Histidine 57 provides a ligand contact to heme b. The Cytoplasmic segment spans residues 75 to 110 (FVHHNIPDKKDIPWLLNIVEVLKGNEHKVADVGKYN). A helical transmembrane segment spans residues 111-134 (AGQKMMFWSIMSMIFVLLVTGVII). Over 135–150 (WRPYFAQYFPMQVVRY) the chain is Periplasmic. The helical transmembrane segment at 151-175 (SLLIHAAAGIILIHAILIHMYMAFW) threads the bilayer. 2 residues coordinate heme b: histidine 155 and histidine 169. Histidine 169 contacts a menaquinone. The Cytoplasmic portion of the chain corresponds to 176-217 (VKGSIKGMIEGKVSRRWAKKHHPRWYREIEKAEAKKESEEGI).

Belongs to the formate dehydrogenase gamma subunit family. Trimer of heterotrimers, consisting of subunits alpha, beta and gamma. Requires heme as cofactor.

It is found in the cell inner membrane. Formate dehydrogenase allows the bacterium to use formate as major electron donor during anaerobic respiration, when nitrate is used as electron acceptor. Subunit gamma is the cytochrome b556 component of the formate dehydrogenase-N, and also contains a menaquinone reduction site that receives electrons from the beta subunit (FdnH), through its hemes. Formate dehydrogenase-N is part of a system that generates proton motive force, together with the dissimilatory nitrate reductase (Nar). This is Formate dehydrogenase, nitrate-inducible, cytochrome b556(Fdn) subunit (fdnI) from Escherichia coli O157:H7.